The sequence spans 435 residues: Methionine aminopeptidase 2 (435 aa).

The disordered stretch occupies residues 57–77; it reads AIDGDQAAAKKKKSKKKKKKA. Residues 65–77 show a composition bias toward basic residues; the sequence is AKKKKSKKKKKKA. A substrate-binding site is contributed by His-188. Residues Asp-208, Asp-219, and His-288 each coordinate a divalent metal cation. His-296 provides a ligand contact to substrate. 2 residues coordinate a divalent metal cation: Glu-321 and Glu-416.

It belongs to the peptidase M24A family. Methionine aminopeptidase eukaryotic type 2 subfamily. It depends on Co(2+) as a cofactor. The cofactor is Zn(2+). Mn(2+) is required as a cofactor. Requires Fe(2+) as cofactor.

It localises to the cytoplasm. It carries out the reaction Release of N-terminal amino acids, preferentially methionine, from peptides and arylamides.. In terms of biological role, cotranslationally removes the N-terminal methionine from nascent proteins. The N-terminal methionine is often cleaved when the second residue in the primary sequence is small and uncharged (Met-Ala-, Cys, Gly, Pro, Ser, Thr, or Val). In Clavispora lusitaniae (strain ATCC 42720) (Yeast), this protein is Methionine aminopeptidase 2.